Consider the following 1366-residue polypeptide: DNA-directed RNA polymerase subunit beta' (1366 aa).

Basic residues predominate over residues 1–20; it reads MTSSKPKKTSRVRKTTKNSK. The interval 1 to 33 is disordered; it reads MTSSKPKKTSRVRKTTKNSKKNNPVTMPALAKT. 4 residues coordinate Zn(2+): cysteine 248, cysteine 315, cysteine 322, and cysteine 325. The tract at residues 1291–1366 is disordered; sequence YTVDMPQSPA…LQEEGLLSDE (76 aa). The segment covering 1354–1366 has biased composition (low complexity); that stretch reads LEGLQEEGLLSDE.

Belongs to the RNA polymerase beta' chain family. RpoC2 subfamily. In terms of assembly, in cyanobacteria the RNAP catalytic core is composed of 2 alpha, 1 beta, 1 beta', 1 gamma and 1 omega subunit. When a sigma factor is associated with the core the holoenzyme is formed, which can initiate transcription. Requires Zn(2+) as cofactor.

The enzyme catalyses RNA(n) + a ribonucleoside 5'-triphosphate = RNA(n+1) + diphosphate. In terms of biological role, DNA-dependent RNA polymerase catalyzes the transcription of DNA into RNA using the four ribonucleoside triphosphates as substrates. This Prochlorococcus marinus (strain AS9601) protein is DNA-directed RNA polymerase subunit beta'.